Reading from the N-terminus, the 218-residue chain is Glutathione S-transferase Mu 1 (218 aa).

The GST N-terminal domain occupies 2-88 (PMILGYWDIR…YIARKHNLCG (87 aa)). 7–8 (YW) contributes to the glutathione binding site. Residue T34 is modified to Phosphothreonine. Glutathione-binding positions include 43–46 (RSQW), K50, 59–60 (NL), and 72–73 (QS). One can recognise a GST C-terminal domain in the interval 90-208 (TEEEKIRVDI…KSSRFLPRPV (119 aa)). Substrate is bound at residue Y116. S210 carries the phosphoserine modification.

It belongs to the GST superfamily. Mu family. As to quaternary structure, homodimer. As to expression, liver (at protein level).

It is found in the cytoplasm. It catalyses the reaction RX + glutathione = an S-substituted glutathione + a halide anion + H(+). The enzyme catalyses prostaglandin A2 + glutathione = prostaglandin A2-S-(R)-glutathione. It carries out the reaction prostaglandin J2 + glutathione = prostaglandin J2-S-(R)-glutathione. The catalysed reaction is prostaglandin J2 + glutathione = prostaglandin J2-S-(S)-glutathione. It catalyses the reaction prostaglandin A2 + glutathione = prostaglandin A2-S-(S)-glutathione. The enzyme catalyses 11(S)-hydroxy-14(S),15(S)-epoxy-(5Z,8Z,12E)-eicosatrienoate + glutathione = (11S,15S)-dihydroxy-14(R)-S-glutathionyl-(5Z,8Z,12E)-eicosatrienoate. Functionally, conjugation of reduced glutathione to a wide number of exogenous and endogenous hydrophobic electrophiles. Involved in the formation of glutathione conjugates of both prostaglandin A2 (PGA2) and prostaglandin J2 (PGJ2). Participates in the formation of novel hepoxilin regioisomers. In Homo sapiens (Human), this protein is Glutathione S-transferase Mu 1.